The chain runs to 366 residues: Class I histocompatibility antigen, Gogo-C*0202 alpha chain (366 aa).

Residues 1-24 (MRVMAPRTLILLLSGALALTETWA) form the signal peptide. Positions 25–114 (GSHSMRYFYT…LRGYYNQSED (90 aa)) are alpha-1. Topologically, residues 25–308 (GSHSMRYFYT…EPSSQPTIPI (284 aa)) are extracellular. Residue Asn110 is glycosylated (N-linked (GlcNAc...) asparagine). Positions 115 to 206 (GSHTLQSMYG…ENGKETLQRA (92 aa)) are alpha-2. Intrachain disulfides connect Cys125-Cys188 and Cys227-Cys283. Residues 207–298 (EPPKTHVTHH…GLPEPLTLRW (92 aa)) are alpha-3. The Ig-like C1-type domain maps to 209–297 (PKTHVTHHPL…EGLPEPLTLR (89 aa)). The tract at residues 299–308 (EPSSQPTIPI) is connecting peptide. The helical transmembrane segment at 309–332 (VGIVVGLAVLVVLAVLGAVVTAMM) threads the bilayer. At 333 to 366 (CRRKSSGGKGGSCSQAACSNSAQGSDESLITCKA) the chain is on the cytoplasmic side.

Belongs to the MHC class I family. Heterodimer of an alpha chain and a beta chain (beta-2-microglobulin).

The protein localises to the membrane. Functionally, involved in the presentation of foreign antigens to the immune system. This is Class I histocompatibility antigen, Gogo-C*0202 alpha chain from Gorilla gorilla gorilla (Western lowland gorilla).